The chain runs to 342 residues: tRNA N6-adenosine threonylcarbamoyltransferase (342 aa).

The Fe cation site is built by His111 and His115. Substrate is bound by residues 134-138, Asp167, Gly180, and Asn277; that span reads LVSGG. Asp305 provides a ligand contact to Fe cation.

This sequence belongs to the KAE1 / TsaD family. Fe(2+) is required as a cofactor.

Its subcellular location is the cytoplasm. It catalyses the reaction L-threonylcarbamoyladenylate + adenosine(37) in tRNA = N(6)-L-threonylcarbamoyladenosine(37) in tRNA + AMP + H(+). Required for the formation of a threonylcarbamoyl group on adenosine at position 37 (t(6)A37) in tRNAs that read codons beginning with adenine. Is involved in the transfer of the threonylcarbamoyl moiety of threonylcarbamoyl-AMP (TC-AMP) to the N6 group of A37, together with TsaE and TsaB. TsaD likely plays a direct catalytic role in this reaction. The chain is tRNA N6-adenosine threonylcarbamoyltransferase from Histophilus somni (strain 2336) (Haemophilus somnus).